A 236-amino-acid polypeptide reads, in one-letter code: Protein-S-isoprenylcysteine O-methyltransferase (236 aa).

Helical transmembrane passes span 3-23 (NLHT…LGCV), 24-44 (FGLG…FFAF), 76-96 (AYWL…GKSF), and 108-128 (FLIN…LCLG). Residues 155–158 (HLLV), Tyr163, and 168–171 (HPSY) each bind S-adenosyl-L-methionine. A helical transmembrane segment spans residues 174-194 (FFIWALGTQMLLGNFVSTLLF). Arg205 is a substrate binding site. Glu209 is a binding site for S-adenosyl-L-methionine.

This sequence belongs to the class VI-like SAM-binding methyltransferase superfamily. Isoprenylcysteine carboxyl methyltransferase family.

It localises to the membrane. It catalyses the reaction [protein]-C-terminal S-[(2E,6E)-farnesyl]-L-cysteine + S-adenosyl-L-methionine = [protein]-C-terminal S-[(2E,6E)-farnesyl]-L-cysteine methyl ester + S-adenosyl-L-homocysteine. Functionally, mediates C-terminal methylation of the isoprenylated C-terminal cysteine in M-factor. This chain is Protein-S-isoprenylcysteine O-methyltransferase (mam4), found in Schizosaccharomyces pombe (strain 972 / ATCC 24843) (Fission yeast).